Consider the following 116-residue polypeptide: Large ribosomal subunit protein bL19 (116 aa).

It belongs to the bacterial ribosomal protein bL19 family.

In terms of biological role, this protein is located at the 30S-50S ribosomal subunit interface and may play a role in the structure and function of the aminoacyl-tRNA binding site. The sequence is that of Large ribosomal subunit protein bL19 from Actinobacillus pleuropneumoniae serotype 5b (strain L20).